Here is a 539-residue protein sequence, read N- to C-terminus: Chaperonin GroEL (539 aa).

ATP contacts are provided by residues 29 to 32 (TLGP), 86 to 90 (DGTTT), Gly-413, 477 to 479 (NAA), and Asp-493.

This sequence belongs to the chaperonin (HSP60) family. In terms of assembly, forms a cylinder of 14 subunits composed of two heptameric rings stacked back-to-back. Interacts with the co-chaperonin GroES.

Its subcellular location is the cytoplasm. It catalyses the reaction ATP + H2O + a folded polypeptide = ADP + phosphate + an unfolded polypeptide.. Together with its co-chaperonin GroES, plays an essential role in assisting protein folding. The GroEL-GroES system forms a nano-cage that allows encapsulation of the non-native substrate proteins and provides a physical environment optimized to promote and accelerate protein folding. The chain is Chaperonin GroEL from Leifsonia xyli subsp. xyli (strain CTCB07).